Reading from the N-terminus, the 440-residue chain is Adenylosuccinate synthetase (440 aa).

Residues 11–17 (GDEGKGG) and 39–41 (GHT) each bind GTP. Residue Asp-12 is the Proton acceptor of the active site. 2 residues coordinate Mg(2+): Asp-12 and Gly-39. Residues 12 to 15 (DEGK), 37 to 40 (NAGH), Thr-127, Arg-141, Gln-230, Thr-245, and Arg-311 contribute to the IMP site. His-40 (proton donor) is an active-site residue. A substrate-binding site is contributed by 307–313 (TVTGRPR). GTP is bound by residues Arg-313, 339–341 (HLD), and 424–426 (GVG).

This sequence belongs to the adenylosuccinate synthetase family. Homodimer. The cofactor is Mg(2+).

It is found in the cytoplasm. It catalyses the reaction IMP + L-aspartate + GTP = N(6)-(1,2-dicarboxyethyl)-AMP + GDP + phosphate + 2 H(+). It functions in the pathway purine metabolism; AMP biosynthesis via de novo pathway; AMP from IMP: step 1/2. Plays an important role in the de novo pathway of purine nucleotide biosynthesis. Catalyzes the first committed step in the biosynthesis of AMP from IMP. The sequence is that of Adenylosuccinate synthetase from Halobacterium salinarum (strain ATCC 29341 / DSM 671 / R1).